Here is a 435-residue protein sequence, read N- to C-terminus: Ribulose bisphosphate carboxylase large chain (435 aa).

Lys-5 carries the N6,N6,N6-trimethyllysine modification. 2 residues coordinate substrate: Asn-114 and Thr-164. The Proton acceptor role is filled by Lys-166. Lys-168 lines the substrate pocket. Mg(2+) is bound by residues Lys-192, Asp-194, and Glu-195. An N6-carboxylysine modification is found at Lys-192. The active-site Proton acceptor is the His-285. Substrate contacts are provided by Arg-286, His-318, and Ser-370.

Belongs to the RuBisCO large chain family. Type I subfamily. As to quaternary structure, heterohexadecamer of 8 large chains and 8 small chains; disulfide-linked. The disulfide link is formed within the large subunit homodimers. The cofactor is Mg(2+). In terms of processing, the disulfide bond which can form in the large chain dimeric partners within the hexadecamer appears to be associated with oxidative stress and protein turnover.

It is found in the plastid. It localises to the chloroplast. It catalyses the reaction 2 (2R)-3-phosphoglycerate + 2 H(+) = D-ribulose 1,5-bisphosphate + CO2 + H2O. The enzyme catalyses D-ribulose 1,5-bisphosphate + O2 = 2-phosphoglycolate + (2R)-3-phosphoglycerate + 2 H(+). RuBisCO catalyzes two reactions: the carboxylation of D-ribulose 1,5-bisphosphate, the primary event in carbon dioxide fixation, as well as the oxidative fragmentation of the pentose substrate in the photorespiration process. Both reactions occur simultaneously and in competition at the same active site. The chain is Ribulose bisphosphate carboxylase large chain from Drosera burmannii (Burmese sundew).